Reading from the N-terminus, the 109-residue chain is Ribulose bisphosphate carboxylase small subunit (109 aa).

Belongs to the RuBisCO small chain family. As to quaternary structure, heterohexadecamer of 8 large and 8 small subunits.

The protein localises to the carboxysome. Its function is as follows. RuBisCO catalyzes two reactions: the carboxylation of D-ribulose 1,5-bisphosphate, the primary event in carbon dioxide fixation, as well as the oxidative fragmentation of the pentose substrate in the photorespiration process. Both reactions occur simultaneously and in competition at the same active site. Although the small subunit is not catalytic it is essential for maximal activity. The protein is Ribulose bisphosphate carboxylase small subunit of Prochlorothrix hollandica.